We begin with the raw amino-acid sequence, 159 residues long: uncharacterized protein (159 aa).

This is an uncharacterized protein from Homo sapiens (Human).